A 958-amino-acid polypeptide reads, in one-letter code: Protein translocase subunit SecA (958 aa).

Residues Gln86, 104 to 108 (GEGKT), and Asp494 each bind ATP. 2 disordered regions span residues 863–883 (AAAT…AEKT) and 902–937 (QPIS…GTGK). Zn(2+) is bound by residues Cys941, Cys943, Cys952, and His953.

It belongs to the SecA family. Monomer and homodimer. Part of the essential Sec protein translocation apparatus which comprises SecA, SecYEG and auxiliary proteins SecDF. Other proteins may also be involved. Zn(2+) is required as a cofactor.

It is found in the cell membrane. The protein resides in the cytoplasm. It carries out the reaction ATP + H2O + cellular proteinSide 1 = ADP + phosphate + cellular proteinSide 2.. Part of the Sec protein translocase complex. Interacts with the SecYEG preprotein conducting channel. Has a central role in coupling the hydrolysis of ATP to the transfer of proteins into and across the cell membrane, serving as an ATP-driven molecular motor driving the stepwise translocation of polypeptide chains across the membrane. This is Protein translocase subunit SecA from Bifidobacterium adolescentis (strain ATCC 15703 / DSM 20083 / NCTC 11814 / E194a).